The chain runs to 439 residues: 26S proteasome regulatory subunit 4 homolog (439 aa).

The tract at residues 1–46 (MGNNQSQGQGDKGEKKDQPKYQPPPPPTQFGKKKKRRGAETSTKLP) is disordered. 225–232 (GEPGTGKT) is a binding site for ATP.

It belongs to the AAA ATPase family.

It is found in the cytoplasm. It localises to the nucleus. In terms of biological role, the 26S proteasome is involved in the ATP-dependent degradation of ubiquitinated proteins. The regulatory (or ATPase) complex confers ATP dependency and substrate specificity to the 26S complex. Plays an important role in regulating both growth and multicellular development. The polypeptide is 26S proteasome regulatory subunit 4 homolog (psmC1) (Dictyostelium discoideum (Social amoeba)).